Reading from the N-terminus, the 157-residue chain is AP-1 complex subunit sigma-2 (157 aa).

This sequence belongs to the adaptor complexes small subunit family. As to quaternary structure, adaptor protein complex 1 (AP-1) is a heterotetramer composed of two large adaptins (gamma-type subunit AP1G1 and beta-type subunit AP1B1), a medium adaptin (mu-type subunit AP1M1 or AP1M2) and a small adaptin (sigma-type subunit AP1S1 or AP1S2 or AP1S3). Binds to MUC1. In terms of tissue distribution, widely expressed.

It localises to the golgi apparatus. The protein resides in the cytoplasmic vesicle membrane. It is found in the membrane. Its subcellular location is the clathrin-coated pit. Its function is as follows. Subunit of clathrin-associated adaptor protein complex 1 that plays a role in protein sorting in the late-Golgi/trans-Golgi network (TGN) and/or endosomes. The AP complexes mediate both the recruitment of clathrin to membranes and the recognition of sorting signals within the cytosolic tails of transmembrane cargo molecules. The sequence is that of AP-1 complex subunit sigma-2 (AP1S2) from Homo sapiens (Human).